We begin with the raw amino-acid sequence, 171 residues long: uncharacterized protein (171 aa).

The chain crosses the membrane as a helical span at residues 5–25 (FLLTIFALWVGGFGYYLYLIN).

Its subcellular location is the membrane. This is an uncharacterized protein from Rickettsia conorii (strain ATCC VR-613 / Malish 7).